The sequence spans 426 residues: Flotillin-1 (426 aa).

The protein belongs to the band 7/mec-2 family. Flotillin subfamily. As to quaternary structure, heterooligomeric complex of flotillins 1 and 2 and caveolins 1 and 2. Expressed in brain and ventral nerve cord from stage 12-16 of embryogenesis.

It localises to the cell membrane. The protein localises to the membrane. The protein resides in the caveola. Its function is as follows. May act as a scaffolding protein within caveolar membranes, functionally participating in formation of caveolae or caveolae-like vesicles. The protein is Flotillin-1 of Drosophila melanogaster (Fruit fly).